A 517-amino-acid chain; its full sequence is Diacylglycerol O-acyltransferase 1C (517 aa).

The disordered stretch occupies residues 1–82 (MAISDVPAAA…NVGAAANDAG (82 aa)). The segment covering 8 to 17 (AAAGTTATTT) has biased composition (low complexity). Residues 53-64 (ITDDDNIKDHKP) are compositionally biased toward basic and acidic residues. The span at 71–81 (DDNVGAAANDA) shows a compositional bias: low complexity. Helical transmembrane passes span 121–141 (HAGL…RLII), 165–185 (WPLF…FVVE), 197–217 (VVVL…VLVI), 222–242 (SAFV…LKLV), 272–292 (YPYT…TLCY), 305–325 (GWVF…GFII), and 361–381 (VWLC…AELV). The FYXDWWN motif motif lies at 388–394 (FYKDWWN). 3 helical membrane passes run 429–449 (GAAS…CIAV), 451–471 (CHMF…LVLI), and 484–504 (VGNM…SVLL). Histidine 443 is an active-site residue.

The protein belongs to the membrane-bound acyltransferase family. Sterol o-acyltransferase subfamily.

It is found in the endoplasmic reticulum membrane. The catalysed reaction is an acyl-CoA + a 1,2-diacyl-sn-glycerol = a triacyl-sn-glycerol + CoA. The protein operates within glycerolipid metabolism; triacylglycerol biosynthesis. Functionally, involved in triacylglycerol (TAG) synthesis. Catalyzes the acylation of the sn-3 hydroxy group of sn-1,2-diacylglycerol using acyl-CoA. The chain is Diacylglycerol O-acyltransferase 1C from Glycine max (Soybean).